The sequence spans 418 residues: Glutamyl-tRNA reductase (418 aa).

Substrate-binding positions include 49-52, serine 109, 114-116, and glutamine 120; these read TCNR and EPQ. Cysteine 50 acts as the Nucleophile in catalysis. 189-194 contacts NADP(+); it reads GAGETI.

Belongs to the glutamyl-tRNA reductase family. In terms of assembly, homodimer.

It carries out the reaction (S)-4-amino-5-oxopentanoate + tRNA(Glu) + NADP(+) = L-glutamyl-tRNA(Glu) + NADPH + H(+). It functions in the pathway porphyrin-containing compound metabolism; protoporphyrin-IX biosynthesis; 5-aminolevulinate from L-glutamyl-tRNA(Glu): step 1/2. Its function is as follows. Catalyzes the NADPH-dependent reduction of glutamyl-tRNA(Glu) to glutamate 1-semialdehyde (GSA). The polypeptide is Glutamyl-tRNA reductase (Escherichia coli O127:H6 (strain E2348/69 / EPEC)).